The sequence spans 82 residues: Host transcription reprogramming factor 10 (82 aa).

Residues 1–19 (MQIFNMVSLVALFALGATA) form the signal peptide. A C2H2-type zinc finger spans residues 57–81 (WVCHACNKQFTTPAALQKHKDTVVH).

The protein resides in the secreted. The protein localises to the host nucleus. In terms of biological role, probable secreted effector that translocates into the nuclei of host cells to reprogram the expression of targeted genes by binding on effector binding elements in rice. The chain is Host transcription reprogramming factor 10 from Pyricularia oryzae (strain 70-15 / ATCC MYA-4617 / FGSC 8958) (Rice blast fungus).